The primary structure comprises 278 residues: Adenosylcobinamide-GDP ribazoletransferase (278 aa).

Transmembrane regions (helical) follow at residues 44 to 64 (GIGVVVGGAAAAMFALLQLLL), 69 to 89 (FTPLVAAAFSTVATVWLTGGF), 121 to 141 (AFGAMALVLALLCKVALLALL), 161 to 181 (VCAALWTGHIVSRGLPLVMIW), 204 to 224 (GGLAIAFSWCFGALALASLAL), and 227 to 247 (INLIVACGFSVLALLGLLRFF).

This sequence belongs to the CobS family. It depends on Mg(2+) as a cofactor.

The protein localises to the cell inner membrane. It carries out the reaction alpha-ribazole + adenosylcob(III)inamide-GDP = adenosylcob(III)alamin + GMP + H(+). It catalyses the reaction alpha-ribazole 5'-phosphate + adenosylcob(III)inamide-GDP = adenosylcob(III)alamin 5'-phosphate + GMP + H(+). It participates in cofactor biosynthesis; adenosylcobalamin biosynthesis; adenosylcobalamin from cob(II)yrinate a,c-diamide: step 7/7. In terms of biological role, joins adenosylcobinamide-GDP and alpha-ribazole to generate adenosylcobalamin (Ado-cobalamin). Also synthesizes adenosylcobalamin 5'-phosphate from adenosylcobinamide-GDP and alpha-ribazole 5'-phosphate. This chain is Adenosylcobinamide-GDP ribazoletransferase, found in Polaromonas naphthalenivorans (strain CJ2).